A 319-amino-acid chain; its full sequence is Transcriptional regulator LsrR (319 aa).

The H-T-H motif DNA-binding region spans Gln32–Gln55.

This sequence belongs to the SorC transcriptional regulatory family.

Its subcellular location is the cytoplasm. Inactivated by phosphorylated autoinducer-2 (phospho-AI-2). Phospho-AI-2 acts by binding to LsrR, which is then unable to bind to the promoter regions, allowing the transcription of the target genes. In terms of biological role, transcriptional regulator that represses the expression of the lsr operon in the absence of the quorum-sensing signaling molecule autoinducer 2 (AI-2). It also represses the expression of the lsrRK operon. Acts by binding to the intergenic region between the lsr operon and lsrR. In the presence of phosphorylated autoinducer-2 (phospho-AI-2), LsrR is inactivated, leading to the transcription of the genes. This chain is Transcriptional regulator LsrR (lsrR), found in Salmonella paratyphi A (strain ATCC 9150 / SARB42).